The primary structure comprises 550 residues: Integral membrane protein DGCR2/IDD (550 aa).

A signal peptide spans 1–20 (MVPKADSGAFLLLFLLVLTV). Residues 21–349 (TEPLRPELRC…LFDSMASGMR (329 aa)) are Extracellular-facing. The LDL-receptor class A domain occupies 28–68 (LRCNPGQFACRSGTIQCIPLPWQCDGWATCEDESDEANCPE). Disulfide bonds link cysteine 30–cysteine 44, cysteine 37–cysteine 57, and cysteine 51–cysteine 66. The tract at residues 69 to 92 (VTGEVRPHHGKEAVDPRQGRARGG) is disordered. The segment covering 71-92 (GEVRPHHGKEAVDPRQGRARGG) has biased composition (basic and acidic residues). Residues 115–241 (CPTGWHHYEG…FCAQLQCFHF (127 aa)) enclose the C-type lectin domain. Intrachain disulfides connect cysteine 145/cysteine 265 and cysteine 233/cysteine 257. N-linked (GlcNAc...) asparagine glycans are attached at residues asparagine 149 and asparagine 196. In terms of domain architecture, VWFC spans 270-333 (TCVDIKDNVV…PKECCKFMCL (64 aa)). The helical transmembrane segment at 350 to 368 (LVVSCISSFLILSLLLFMV) threads the bilayer. At 369-550 (HRLRQRRRER…HSRSSLNTVV (182 aa)) the chain is on the cytoplasmic side. A Phosphoserine modification is found at serine 381. The interval 500–550 (AGASLADLEDSADSSSALLVPPDPAQSGSTPAAEALPGGGRHSRSSLNTVV) is disordered.

Predominantly expressed in brain, heart, lung and fetal kidney. Low levels in liver and adult kidney.

It localises to the membrane. Functionally, putative adhesion receptor, that could be involved in cell-cell or cell-matrix interactions required for normal cell differentiation and migration. This is Integral membrane protein DGCR2/IDD (DGCR2) from Homo sapiens (Human).